The following is a 208-amino-acid chain: Small ribosomal subunit protein uS4 (208 aa).

Positions Ser98–Ser160 constitute an S4 RNA-binding domain.

This sequence belongs to the universal ribosomal protein uS4 family. In terms of assembly, part of the 30S ribosomal subunit. Contacts protein S5. The interaction surface between S4 and S5 is involved in control of translational fidelity.

One of the primary rRNA binding proteins, it binds directly to 16S rRNA where it nucleates assembly of the body of the 30S subunit. Functionally, with S5 and S12 plays an important role in translational accuracy. This chain is Small ribosomal subunit protein uS4, found in Nitrosomonas eutropha (strain DSM 101675 / C91 / Nm57).